The chain runs to 149 residues: Sec-independent protein translocase protein TatB (149 aa).

The helical transmembrane segment at 1–22 (MFDGIGFMELLLIGVLGLIVLG) threads the bilayer. Polar residues predominate over residues 86–113 (LKQAAQSVNRPYQVQDTPSAQDNQIHNP). The segment at 86–149 (LKQAAQSVNR…DPRSNTKANG (64 aa)) is disordered. A compositionally biased stretch (low complexity) spans 114 to 135 (ASQTVSTEASSTSASSAPKSES).

It belongs to the TatB family. The Tat system comprises two distinct complexes: a TatABC complex, containing multiple copies of TatA, TatB and TatC subunits, and a separate TatA complex, containing only TatA subunits. Substrates initially bind to the TatABC complex, which probably triggers association of the separate TatA complex to form the active translocon.

The protein localises to the cell inner membrane. Its function is as follows. Part of the twin-arginine translocation (Tat) system that transports large folded proteins containing a characteristic twin-arginine motif in their signal peptide across membranes. Together with TatC, TatB is part of a receptor directly interacting with Tat signal peptides. TatB may form an oligomeric binding site that transiently accommodates folded Tat precursor proteins before their translocation. The chain is Sec-independent protein translocase protein TatB from Shewanella oneidensis (strain ATCC 700550 / JCM 31522 / CIP 106686 / LMG 19005 / NCIMB 14063 / MR-1).